The following is a 58-amino-acid chain: Ribosome modulation factor (58 aa).

The span at 1–14 shows a compositional bias: basic residues; it reads MKRQKRDKLTRAHS. The disordered stretch occupies residues 1–25; it reads MKRQKRDKLTRAHSKGYQAGISGRS.

This sequence belongs to the ribosome modulation factor family.

Its subcellular location is the cytoplasm. Functionally, during stationary phase, converts 70S ribosomes to an inactive dimeric form (100S ribosomes). The chain is Ribosome modulation factor from Alteromonas naphthalenivorans.